The chain runs to 195 residues: Putative NADH dehydrogenase/NAD(P)H nitroreductase Caul_0018 (195 aa).

Belongs to the nitroreductase family. HadB/RutE subfamily. The cofactor is FMN.

This Caulobacter sp. (strain K31) protein is Putative NADH dehydrogenase/NAD(P)H nitroreductase Caul_0018.